The sequence spans 365 residues: NAC domain-containing protein 43 (365 aa).

Residues 16-180 (VPPGFRFHPT…GWVVCRIFKK (165 aa)) enclose the NAC domain. A DNA-binding region spans residues 116-186 (IGMRKTLVFY…IFKKKNLHKT (71 aa)).

Expressed in various aboveground tissues undergoing thickening of the lignified secondary wall such as anthers, filaments of stamens, the base of carpels, styles, the boundaries between siliques and pedicels, the midrib of leaf veins, and inflorescence stems, specifically in interfascicular fibers (sclerenchyma), cells differentiating into vascular vessels, and xylary fibers (secondary xylem).

It is found in the nucleus. Its function is as follows. Transcription activator of genes involved in biosynthesis of secondary walls. Together with NST2 and NST3, required for the secondary cell wall thickening of sclerenchymatous fibers, secondary xylem (tracheary elements), and of the anther endocethium, which is necessary for anther dehiscence. May also regulate the secondary cell wall lignification of other tissues. The polypeptide is NAC domain-containing protein 43 (NAC043) (Arabidopsis thaliana (Mouse-ear cress)).